Consider the following 684-residue polypeptide: Divalent metal cation transporter MntH (684 aa).

The disordered stretch occupies residues 223-250; it reads PTAINAPSGTPAAGRTSPTPTTDSQRRS. Transmembrane regions (helical) follow at residues 283-303, 318-340, 365-387, 391-413, 427-446, 467-489, 514-534, 555-577, 597-616, 621-643, and 656-678; these read TSLKTSWYLLGPAFVAAIAYV, FGYLLLWVIVAANVMAALVQYLS, LAYWAQAEIVAMATDVAEVIGGA, RIMFNLPLPIGGIITGVVSLLLL, VITALLLVIAIGFTASFFVV, VLLAAAIMGATVMPHAVYLHSGL, VGLAMLIAGGVNAAMLLVAAL, TLGATIAVLFAVGLLASGLASSS, MLVRRLITLGPALAILTLGF, TLVLSQVVLSFGIPFAVLPLVKL, and HRATTWVGWVVAVMVSLLNVMLI.

It in the C-terminal section; belongs to the NRAMP family.

It is found in the cell membrane. Its function is as follows. H(+)-stimulated, divalent metal cation uptake system. This chain is Divalent metal cation transporter MntH (mntH), found in Mycobacterium bovis (strain ATCC BAA-935 / AF2122/97).